The chain runs to 189 residues: NADH dehydrogenase [ubiquinone] 1 beta subcomplex subunit 5, mitochondrial (189 aa).

The transit peptide at 1–46 (MAGMSLLRRVSVTAVAALSGRSLGTRLGFGGFLTRGFPKAVAPVRH) directs the protein to the mitochondrion. Residues 73–93 (FYIALTGIPVVIIITLVNVFI) traverse the membrane as a helical segment.

The protein belongs to the complex I NDUFB5 subunit family. In terms of assembly, complex I is composed of 45 different subunits.

The protein localises to the mitochondrion inner membrane. Accessory subunit of the mitochondrial membrane respiratory chain NADH dehydrogenase (Complex I), that is believed not to be involved in catalysis. Complex I functions in the transfer of electrons from NADH to the respiratory chain. The immediate electron acceptor for the enzyme is believed to be ubiquinone. This Macaca fascicularis (Crab-eating macaque) protein is NADH dehydrogenase [ubiquinone] 1 beta subcomplex subunit 5, mitochondrial (NDUFB5).